The chain runs to 184 residues: MSVSTLFQQNNNNIYNKSNTLTNTPSNPTGNTNTLWSNSGFNPPHLMYGASDVTAAINNIAFETGTFNLQLSGPWASPISHAVSYTKINNLVNLTIPTYQAQATTLASISSIVGALPTNLRPVNNPEIDFEIFVLDNGTRTTNPGLITLLSNGQILIYKDNNLGQFTVGSGGSGFNPFSITYMI.

The interval 14–35 (IYNKSNTLTNTPSNPTGNTNTL) is disordered.

Belongs to the sputnik virus V6 family.

It localises to the virion. This is Structural protein V8 from Sputnik virophage.